Consider the following 115-residue polypeptide: Peptidyl-tRNA hydrolase (115 aa).

The protein belongs to the PTH2 family.

It is found in the cytoplasm. The enzyme catalyses an N-acyl-L-alpha-aminoacyl-tRNA + H2O = an N-acyl-L-amino acid + a tRNA + H(+). In terms of biological role, the natural substrate for this enzyme may be peptidyl-tRNAs which drop off the ribosome during protein synthesis. The sequence is that of Peptidyl-tRNA hydrolase from Methanococcoides burtonii (strain DSM 6242 / NBRC 107633 / OCM 468 / ACE-M).